A 454-amino-acid polypeptide reads, in one-letter code: Enolase (454 aa).

Q167 is a binding site for (2R)-2-phosphoglycerate. E209 acts as the Proton donor in catalysis. Mg(2+) is bound by residues D250, E312, and D339. Residues K364, R393, S394, and K415 each coordinate (2R)-2-phosphoglycerate. K364 (proton acceptor) is an active-site residue.

This sequence belongs to the enolase family. Mg(2+) is required as a cofactor.

It is found in the cytoplasm. It localises to the secreted. Its subcellular location is the cell surface. The catalysed reaction is (2R)-2-phosphoglycerate = phosphoenolpyruvate + H2O. The protein operates within carbohydrate degradation; glycolysis; pyruvate from D-glyceraldehyde 3-phosphate: step 4/5. Its function is as follows. Catalyzes the reversible conversion of 2-phosphoglycerate (2-PG) into phosphoenolpyruvate (PEP). It is essential for the degradation of carbohydrates via glycolysis. This chain is Enolase, found in Mycoplasmopsis agalactiae (strain NCTC 10123 / CIP 59.7 / PG2) (Mycoplasma agalactiae).